We begin with the raw amino-acid sequence, 185 residues long: MISTNDFRTGLTIELDGEVYQVIEFQHVKPGKGSPFVRSKLRNLMTGAVIEKTFNAGEKVPKAHVDRREVQYLYNDGDNFYCMDMETYDQFPLTKEQFGDAINYVKENTNLWVLFFKDKVIGVELPNFVELKVIDTPPGIKGDTASGGSKPATLETGYVVQVPFFVEVGDVLQIDTRTGQYIKRV.

Belongs to the elongation factor P family.

The protein localises to the cytoplasm. The protein operates within protein biosynthesis; polypeptide chain elongation. In terms of biological role, involved in peptide bond synthesis. Stimulates efficient translation and peptide-bond synthesis on native or reconstituted 70S ribosomes in vitro. Probably functions indirectly by altering the affinity of the ribosome for aminoacyl-tRNA, thus increasing their reactivity as acceptors for peptidyl transferase. This chain is Elongation factor P, found in Carboxydothermus hydrogenoformans (strain ATCC BAA-161 / DSM 6008 / Z-2901).